The sequence spans 202 residues: Translation initiation factor IF-3 (202 aa).

The disordered stretch occupies residues 172–202 (KTRASARHPEVPGAGSVQDIDATGDTDGSPH).

This sequence belongs to the IF-3 family. As to quaternary structure, monomer.

Its subcellular location is the cytoplasm. Functionally, IF-3 binds to the 30S ribosomal subunit and shifts the equilibrium between 70S ribosomes and their 50S and 30S subunits in favor of the free subunits, thus enhancing the availability of 30S subunits on which protein synthesis initiation begins. In Mycobacterium leprae (strain TN), this protein is Translation initiation factor IF-3.